A 432-amino-acid polypeptide reads, in one-letter code: Gamma-glutamyl phosphate reductase (432 aa).

Belongs to the gamma-glutamyl phosphate reductase family.

Its subcellular location is the cytoplasm. It carries out the reaction L-glutamate 5-semialdehyde + phosphate + NADP(+) = L-glutamyl 5-phosphate + NADPH + H(+). Its pathway is amino-acid biosynthesis; L-proline biosynthesis; L-glutamate 5-semialdehyde from L-glutamate: step 2/2. Its function is as follows. Catalyzes the NADPH-dependent reduction of L-glutamate 5-phosphate into L-glutamate 5-semialdehyde and phosphate. The product spontaneously undergoes cyclization to form 1-pyrroline-5-carboxylate. In Kineococcus radiotolerans (strain ATCC BAA-149 / DSM 14245 / SRS30216), this protein is Gamma-glutamyl phosphate reductase.